The following is a 207-amino-acid chain: Small ribosomal subunit protein uS4A (207 aa).

The 61-residue stretch at 98-158 (TRLDNVAYRL…EKSKSSAKFK (61 aa)) folds into the S4 RNA-binding domain.

The protein belongs to the universal ribosomal protein uS4 family. Part of the 30S ribosomal subunit. Contacts protein S5. The interaction surface between S4 and S5 is involved in control of translational fidelity.

In terms of biological role, one of the primary rRNA binding proteins, it binds directly to 16S rRNA where it nucleates assembly of the body of the 30S subunit. Its function is as follows. With S5 and S12 plays an important role in translational accuracy. The protein is Small ribosomal subunit protein uS4A of Alkaliphilus oremlandii (strain OhILAs) (Clostridium oremlandii (strain OhILAs)).